The following is a 369-amino-acid chain: Choline-phosphate cytidylyltransferase B (369 aa).

A disordered region spans residues 1 to 27 (MPVLTTDAESETGIPKSLSNEPPSETM). CTP-binding residues include isoleucine 84, phenylalanine 85, histidine 92, and lysine 122. The phosphocholine site is built by lysine 122 and tryptophan 151. CTP-binding residues include histidine 168, aspartate 169, tyrosine 173, glutamine 195, arginine 196, threonine 197, and isoleucine 200. The disordered stretch occupies residues 309–369 (RMLQALSPKQ…SMSEGDEDEK (61 aa)). Phosphoserine is present on residues serine 315, serine 319, serine 322, serine 323, serine 329, serine 331, and serine 335. Residues 319 to 339 (SPVSSPTRSRSPSRSPSPTFS) are compositionally biased toward low complexity. A Phosphothreonine modification is found at threonine 345. Phosphoserine occurs at positions 346, 349, 350, 355, 360, and 362. Positions 351–362 (PKAASASISSMS) are enriched in low complexity.

Belongs to the cytidylyltransferase family. Homodimer. Highly expressed in brain (at protein level). Expressed in liver (at protein level). Expressed at lower levels in lung and gonads. As to expression, expressed in brain (at protein level). Expressed at lower levels in lung and gonads.

It localises to the endoplasmic reticulum. The protein resides in the cytoplasm. The catalysed reaction is phosphocholine + CTP + H(+) = CDP-choline + diphosphate. The protein operates within phospholipid metabolism; phosphatidylcholine biosynthesis; phosphatidylcholine from phosphocholine: step 1/2. In terms of biological role, catalyzes the key rate-limiting step in the CDP-choline pathway for phosphatidylcholine biosynthesis. Plays an important role in ovary maturation and the maintenance of sperm production. Functionally, catalyzes the key rate-limiting step in the CDP-choline pathway for phosphatidylcholine biosynthesis. The chain is Choline-phosphate cytidylyltransferase B (Pcyt1b) from Mus musculus (Mouse).